The primary structure comprises 931 residues: Scaffold attachment factor B1 (931 aa).

Residues 1–24 (MAETLSGLGDSGAASAAAVSSAAS) are compositionally biased toward low complexity. A disordered region spans residues 1–35 (MAETLSGLGDSGAASAAAVSSAASETGTRRLSDLR). Position 2 is an N-acetylalanine (Ala-2). 2 positions are modified to phosphoserine: Ser-24 and Ser-55. One can recognise an SAP domain in the interval 31–65 (LSDLRVIDLRAELRKRNLTSSGNKSVLMERLKKAI). The disordered stretch occupies residues 64–121 (AIEEEGGNPDEIEVISEGNKKMPKRPSKGKKPEDEGVEDNGLEENSGDGQEDVETSLE). The span at 67–77 (EEGGNPDEIEV) shows a compositional bias: acidic residues. Phosphoserine is present on Ser-79. The segment covering 98-118 (EGVEDNGLEENSGDGQEDVET) has biased composition (acidic residues). Glycyl lysine isopeptide (Lys-Gly) (interchain with G-Cter in SUMO2) cross-links involve residues Lys-171 and Lys-185. Ser-194, Ser-196, and Ser-208 each carry phosphoserine. Disordered stretches follow at residues 205–304 (EEAS…TRCQ) and 316–430 (KREP…GRNF). Residues 224 to 233 (CKSEPVKEEG) are compositionally biased toward basic and acidic residues. Lys-230 participates in a covalent cross-link: Glycyl lysine isopeptide (Lys-Gly) (interchain with G-Cter in SUMO). A compositionally biased stretch (acidic residues) spans 267 to 287 (EEEEEEEEEEEQEEEQEEEGD). A Glycyl lysine isopeptide (Lys-Gly) (interchain with G-Cter in SUMO) cross-link involves residue Lys-316. The span at 341 to 356 (EQSSTAAQLPETTSQE) shows a compositional bias: polar residues. Residues 368–380 (EPRDSKDDVKKFA) show a composition bias toward basic and acidic residues. Residue Lys-403 forms a Glycyl lysine isopeptide (Lys-Gly) (interchain with G-Cter in SUMO2) linkage. Phosphoserine is present on residues Ser-405 and Ser-406. The span at 412–423 (DTKRLSREEKGR) shows a compositional bias: basic and acidic residues. Lys-414 participates in a covalent cross-link: Glycyl lysine isopeptide (Lys-Gly) (interchain with G-Cter in SUMO2). Residues 428-506 (RNFWVSGLSS…KMISVEKAKS (79 aa)) form the RRM domain. Ser-437 is subject to Phosphoserine. 2 stretches are compositionally biased toward basic and acidic residues: residues 500–573 (SVEK…ERSR) and 581–592 (GTERTVVMDKSK). Disordered regions lie at residues 500–663 (SVEK…WERE), 691–720 (RLER…LRRQ), 759–843 (RYHS…PRRD), and 872–931 (RWQG…QQTQ). Residues Lys-505, Lys-536, Lys-565, and Lys-592 each participate in a glycyl lysine isopeptide (Lys-Gly) (interchain with G-Cter in SUMO2) cross-link. Residues 550–816 (TDDGSTEKSK…RHGGPERHGR (267 aa)) are interaction with POLR2A; SFRS1; SFRS9 and SFRS10. Lys-600 is covalently cross-linked (Glycyl lysine isopeptide (Lys-Gly) (interchain with G-Cter in SUMO1); alternate). Residue Lys-600 forms a Glycyl lysine isopeptide (Lys-Gly) (interchain with G-Cter in SUMO2); alternate linkage. Residues Ser-602, Ser-604, Ser-623, and Ser-626 each carry the phosphoserine modification. Residues 603 to 663 (GSKERASKSQ…QRLQAQWERE (61 aa)) are compositionally biased toward basic and acidic residues. A Nuclear localization signal motif is present at residues 621–638 (KRSVVSFDKVKESRKSRD). Position 629 is an N6-acetyllysine (Lys-629). A compositionally biased stretch (basic and acidic residues) spans 759-820 (RYHSDFSRQD…PERHGRDSRD (62 aa)). Arg-834 is modified (omega-N-methylarginine). Asymmetric dimethylarginine is present on residues Arg-892, Arg-898, Arg-908, and Arg-914.

In terms of assembly, monomer and homodimer. Interacts with KHDRBS3. Interacts with CLK2. Interacts with POLR2A, ASF/SRSF1, SRp30c/SRFS9 and TRA2B/SFRS10. Interacts with SRPK1 and inhibits its activity. Interacts with RBMX. Interacts with FUS. Interacts with ZBED4. Post-translationally, phosphorylated by CDC-like kinase 2 (CLK2). In terms of processing, sumoylated by PIAS1 with SUMO1 and SUMO2/3, desumoylated by SENP1. Sumoylation is required for transcriptional repressor activity.

The protein resides in the nucleus. In terms of biological role, binds to scaffold/matrix attachment region (S/MAR) DNA and forms a molecular assembly point to allow the formation of a 'transcriptosomal' complex (consisting of SR proteins and RNA polymerase II) coupling transcription and RNA processing. Functions as an estrogen receptor corepressor and can also bind to the HSP27 promoter and decrease its transcription. Thereby acts as a negative regulator of cell proliferation. When associated with RBMX, binds to and stimulates transcription from the SREBF1 promoter. The chain is Scaffold attachment factor B1 (Safb) from Rattus norvegicus (Rat).